Here is a 341-residue protein sequence, read N- to C-terminus: Sulfate/thiosulfate import ATP-binding protein CysA 2 (341 aa).

Positions 3–235 (IRLENVVKTF…PNSSFVMRFL (233 aa)) constitute an ABC transporter domain. 35–42 (GPSGSGKT) contacts ATP.

The protein belongs to the ABC transporter superfamily. Sulfate/tungstate importer (TC 3.A.1.6) family. In terms of assembly, the complex is composed of two ATP-binding proteins (CysA), two transmembrane proteins (CysT and CysW) and a solute-binding protein (CysP).

The protein localises to the cell inner membrane. The enzyme catalyses sulfate(out) + ATP + H2O = sulfate(in) + ADP + phosphate + H(+). It catalyses the reaction thiosulfate(out) + ATP + H2O = thiosulfate(in) + ADP + phosphate + H(+). Its function is as follows. Part of the ABC transporter complex CysAWTP involved in sulfate/thiosulfate import. Responsible for energy coupling to the transport system. This Agrobacterium fabrum (strain C58 / ATCC 33970) (Agrobacterium tumefaciens (strain C58)) protein is Sulfate/thiosulfate import ATP-binding protein CysA 2.